Here is a 233-residue protein sequence, read N- to C-terminus: Transcriptional regulatory protein WalR (233 aa).

Positions Lys4–Leu117 constitute a Response regulatory domain. Asp53 bears the 4-aspartylphosphate mark. The residue at position 101 (Thr101) is a Phosphothreonine. A DNA-binding region (ompR/PhoB-type) is located at residues Thr132–Gln231.

Phosphorylated by WalK on Asp-53. Phosphorylated by PknB on Thr-101.

The protein localises to the cytoplasm. Its function is as follows. Member of the two-component regulatory system WalK/WalR that regulates genes involved in cell wall metabolism, virulence regulation, biofilm production, oxidative stress resistance and antibiotic resistance via direct or indirect regulation of autolysins. Functions as a transcription regulator by direct binding to promoter regions. The protein is Transcriptional regulatory protein WalR (walR) of Staphylococcus aureus (strain Mu3 / ATCC 700698).